Here is a 305-residue protein sequence, read N- to C-terminus: Aquaporin NIP6-1 (305 aa).

The disordered stretch occupies residues 1 to 30 (MDHEEIPSTPSTPATTPGTPGAPLFGGFEG). The segment covering 7–23 (PSTPSTPATTPGTPGAP) has biased composition (low complexity). Transmembrane regions (helical) follow at residues 82 to 102 (LGAE…TAIV) and 111 to 131 (TLIG…LSTG). Residues 139–141 (NPA) carry the NPA 1 motif. 3 helical membrane passes run 159–179 (VYIG…KAVF), 194–214 (LSQA…VVTA), and 221–241 (AVGE…ILIA). Residues 250 to 252 (NPV) carry the NPA 2 motif. A helical transmembrane segment spans residues 267–287 (IWVYLTAPILGALIGAGTYTI). Position 302 is a phosphoserine (serine 302).

Belongs to the MIP/aquaporin (TC 1.A.8) family. NIP (TC 1.A.8.12) subfamily. In terms of tissue distribution, expressed in roots.

It localises to the membrane. Transports glycerol, urea and formamide, in Xenopus laevis oocytes. Very low water transport activity. The protein is Aquaporin NIP6-1 (NIP6-1) of Arabidopsis thaliana (Mouse-ear cress).